A 133-amino-acid polypeptide reads, in one-letter code: Small ribosomal subunit protein uS8 (133 aa).

Belongs to the universal ribosomal protein uS8 family. Part of the 30S ribosomal subunit. Contacts proteins S5 and S12.

Its function is as follows. One of the primary rRNA binding proteins, it binds directly to 16S rRNA central domain where it helps coordinate assembly of the platform of the 30S subunit. The polypeptide is Small ribosomal subunit protein uS8 (Chlamydia abortus (strain DSM 27085 / S26/3) (Chlamydophila abortus)).